Here is a 105-residue protein sequence, read N- to C-terminus: Small ribosomal subunit protein eS25 (105 aa).

It belongs to the eukaryotic ribosomal protein eS25 family. Component of the small ribosomal subunit. Mature ribosomes consist of a small (40S) and a large (60S) subunit. The 40S subunit contains about 32 different proteins and 1 molecule of RNA (18S). The 60S subunit contains 45 different proteins and 3 molecules of RNA (25S, 5.8S and 5S).

It localises to the cytoplasm. Its function is as follows. Component of the ribosome, a large ribonucleoprotein complex responsible for the synthesis of proteins in the cell. The small ribosomal subunit (SSU) binds messenger RNAs (mRNAs) and translates the encoded message by selecting cognate aminoacyl-transfer RNA (tRNA) molecules. The large subunit (LSU) contains the ribosomal catalytic site termed the peptidyl transferase center (PTC), which catalyzes the formation of peptide bonds, thereby polymerizing the amino acids delivered by tRNAs into a polypeptide chain. The nascent polypeptides leave the ribosome through a tunnel in the LSU and interact with protein factors that function in enzymatic processing, targeting, and the membrane insertion of nascent chains at the exit of the ribosomal tunnel. The chain is Small ribosomal subunit protein eS25 (RPS25B) from Candida albicans (strain SC5314 / ATCC MYA-2876) (Yeast).